Consider the following 693-residue polypeptide: TGF-beta-activated kinase 1 and MAP3K7-binding protein 2 (693 aa).

Positions 8–51 (IDFQVLHDLRQKFPEVPEVVVSRCMLQNNNNLDACCAVLSQEST) constitute a CUE domain. Residues 91–130 (GREGSRMNGSRTLTHSISDGQLQGGQSNSELFQQEPQTAP) are disordered. The segment covering 97–130 (MNGSRTLTHSISDGQLQGGQSNSELFQQEPQTAP) has biased composition (polar residues). Arg-173 is subject to Asymmetric dimethylarginine. Residues 219–310 (ITTPGGTTRQ…SGSSQSSAHS (92 aa)) form a disordered region. Positions 220 to 231 (TTPGGTTRQTQQ) are enriched in low complexity. Residues 232–282 (HSGWVSQFNPMNPQQVYQPSQPGPWTTCPASNPLSHTSSQQPNQQGHQTSH) show a composition bias toward polar residues. Residues 286-310 (PISSPTTSQPPTIHSSGSSQSSAHS) are compositionally biased toward low complexity. Lys-329 participates in a covalent cross-link: Glycyl lysine isopeptide (Lys-Gly) (interchain with G-Cter in SUMO). The disordered stretch occupies residues 330–381 (LEPPQRNNSSKLRSSGPRTSSTSSSVNSQTLNRNQPTVYIAASPPNTDELMS). The segment covering 343-359 (SSGPRTSSTSSSVNSQT) has biased composition (low complexity). Ser-372, Ser-450, Ser-482, and Ser-524 each carry phosphoserine. Positions 532-619 (YTQALLVHQK…TKEIDLFQAR (88 aa)) form a coiled coil. Lys-562 is covalently cross-linked (Glycyl lysine isopeptide (Lys-Gly) (interchain with G-Cter in SUMO)). Ser-582 is modified (phosphoserine). Lys-611 participates in a covalent cross-link: Glycyl lysine isopeptide (Lys-Gly) (interchain with G-Cter in ubiquitin). A disordered region spans residues 642 to 663 (PPKPKDQRSIIKTPKTQDTEDD). The RanBP2-type zinc finger occupies 663-693 (DEGAQWNCTACTFLNHPALIRCEQCEMPRHF). Cys-673 carries the (Microbial infection) S-methylcysteine modification. Positions 675-685 (FLNHPALIRCE) are interaction with polyubiquitin.

Interacts with MAP3K7 and TRAF6. Identified in the TRIKA2 complex composed of MAP3K7, TAB1 and TAB2. Binds 'Lys-63'-linked polyubiquitin chains. Interacts with NCOR1 and HDAC3 to form a ternary complex. Interacts (via C-terminal) with NUMBL (via PTB domain). Interacts (via the C-terminus) with DYNC2I2 (via WD domains). Interacts with RBCK1. Interacts with TRIM5. Interacts with TRIM38 (via B30.2/SPRY domain), leading to its translocation to lysosomes and degradation. Interacts with ASB1; this interaction promotes TAB2 stability. In terms of processing, degraded in a lysosome-dependent manner following interaction with TRIM38. Post-translationally, SUMOylated by TRIM60; leading to inhibition of MAPK/NF-kappaB activation and the innate immune response. Ubiquitinated; following IL1 stimulation or TRAF6 overexpression. Ubiquitination involves RBCK1 leading to proteasomal degradation. Ubiquitinated at Lys-611 by TRIM45 leading to proteasomal degradation. In terms of processing, phosphorylated. Post-translationally, (Microbial infection) Methylated at Cys-673 by enteropathogenic E.coli protein NleE or S.flexneri protein OspZ: methylation disrupts zinc-binding and ability to bind 'Lys-63'-linked ubiquitin, leading to NF-kappa-B inactivation. As to expression, widely expressed. In the embryo, expressed in the ventricular trabeculae, endothelial cells of the conotruncal cushions of the outflow tract and in the endothelial cells lining the developing aortic valves.

The protein localises to the membrane. The protein resides in the endosome membrane. Its subcellular location is the lysosome membrane. It is found in the cytoplasm. It localises to the cytosol. Functionally, adapter required to activate the JNK and NF-kappa-B signaling pathways through the specific recognition of 'Lys-63'-linked polyubiquitin chains by its RanBP2-type zinc finger (NZF). Acts as an adapter linking MAP3K7/TAK1 and TRAF6 to 'Lys-63'-linked polyubiquitin chains. The RanBP2-type zinc finger (NZF) specifically recognizes Lys-63'-linked polyubiquitin chains unanchored or anchored to the substrate proteins such as RIPK1/RIP1 and RIPK2: this acts as a scaffold to organize a large signaling complex to promote autophosphorylation of MAP3K7/TAK1, and subsequent activation of I-kappa-B-kinase (IKK) core complex by MAP3K7/TAK1. Also recognizes and binds Lys-63'-linked polyubiquitin chains of heterotypic 'Lys-63'-/'Lys-48'-linked branched ubiquitin chains. Regulates the IL1-mediated translocation of NCOR1 out of the nucleus. Involved in heart development. This Homo sapiens (Human) protein is TGF-beta-activated kinase 1 and MAP3K7-binding protein 2.